The chain runs to 446 residues: uncharacterized protein (446 aa).

2 positions are modified to phosphoserine: S393 and S397. The interval 411 to 431 is disordered; sequence LSSTERRDLDRVRDKQKKQDQ.

The protein belongs to the IFRD family.

Its subcellular location is the cytoplasm. This is an uncharacterized protein from Schizosaccharomyces pombe (strain 972 / ATCC 24843) (Fission yeast).